A 77-amino-acid chain; its full sequence is Acyl carrier protein (77 aa).

The 76-residue stretch at 2 to 77 (ADALERVTKI…DAVNYINSKQ (76 aa)) folds into the Carrier domain. Ser37 bears the O-(pantetheine 4'-phosphoryl)serine mark.

This sequence belongs to the acyl carrier protein (ACP) family. In terms of processing, 4'-phosphopantetheine is transferred from CoA to a specific serine of apo-ACP by AcpS. This modification is essential for activity because fatty acids are bound in thioester linkage to the sulfhydryl of the prosthetic group.

Its subcellular location is the cytoplasm. Its pathway is lipid metabolism; fatty acid biosynthesis. Its function is as follows. Carrier of the growing fatty acid chain in fatty acid biosynthesis. The chain is Acyl carrier protein from Bacillus licheniformis (strain ATCC 14580 / DSM 13 / JCM 2505 / CCUG 7422 / NBRC 12200 / NCIMB 9375 / NCTC 10341 / NRRL NRS-1264 / Gibson 46).